Consider the following 99-residue polypeptide: Cystatin (99 aa).

Residues 3–99 (GGLSPRSVSD…EEKLCGFQVW (97 aa)) form the Cystatin domain. The Secondary area of contact signature appears at 47–51 (QSVAG). Cysteines 65 and 81 form a disulfide.

It belongs to the cystatin family. In terms of tissue distribution, expressed by the venom gland.

The protein resides in the secreted. In terms of biological role, inhibits various C1 cysteine proteases including cathepsin L (Ki is 0.1 nM), papain (Ki is 0.19 nM), cathepsin S (Ki is 1.2 nM), and cathepsin B (Ki is 2.5 nM). This protein has no toxic activity and its function in the venom is unknown. It may play a role as housekeeping or regulatory protein. The protein is Cystatin of Naja atra (Chinese cobra).